A 380-amino-acid polypeptide reads, in one-letter code: tRNA(Met) cytidine acetate ligase (380 aa).

ATP contacts are provided by residues 7 to 20, G101, N151, and R176; that span reads IAEYNPFHNGHLYQ.

The protein belongs to the TmcAL family.

The protein localises to the cytoplasm. The catalysed reaction is cytidine(34) in elongator tRNA(Met) + acetate + ATP = N(4)-acetylcytidine(34) in elongator tRNA(Met) + AMP + diphosphate. Catalyzes the formation of N(4)-acetylcytidine (ac(4)C) at the wobble position of elongator tRNA(Met), using acetate and ATP as substrates. First activates an acetate ion to form acetyladenylate (Ac-AMP) and then transfers the acetyl group to tRNA to form ac(4)C34. The polypeptide is tRNA(Met) cytidine acetate ligase (Ligilactobacillus salivarius (strain UCC118) (Lactobacillus salivarius)).